We begin with the raw amino-acid sequence, 376 residues long: Flagellin B (376 aa).

The stretch at 103-129 (SNSSSERRAIQEEVSALNDELNRIAET) forms a coiled coil.

It belongs to the bacterial flagellin family. In terms of assembly, heteromer of multiple flagellin subunits including FlaA, FlaB, FlaC, FlaD and FlaE.

The protein resides in the secreted. Its subcellular location is the bacterial flagellum. Flagellin is the subunit protein which polymerizes to form the filaments of bacterial flagella. FlaB is not essential for flagellar synthesis and motility. This Vibrio cholerae serotype O1 (strain ATCC 39541 / Classical Ogawa 395 / O395) protein is Flagellin B (flaB).